A 140-amino-acid chain; its full sequence is Large ribosomal subunit protein uL14 (140 aa).

This sequence belongs to the universal ribosomal protein uL14 family. As to quaternary structure, part of the 50S ribosomal subunit. Forms a cluster with proteins L3 and L24e, part of which may contact the 16S rRNA in 2 intersubunit bridges.

In terms of biological role, binds to 23S rRNA. Forms part of two intersubunit bridges in the 70S ribosome. In Staphylothermus marinus (strain ATCC 43588 / DSM 3639 / JCM 9404 / F1), this protein is Large ribosomal subunit protein uL14.